We begin with the raw amino-acid sequence, 281 residues long: Diaminopimelate epimerase (281 aa).

2 residues coordinate substrate: asparagine 13 and asparagine 66. Cysteine 75 acts as the Proton donor in catalysis. Substrate contacts are provided by residues 76–77 (GN), asparagine 164, asparagine 197, and 215–216 (ER). The Proton acceptor role is filled by cysteine 224. 225-226 (GT) is a substrate binding site.

It belongs to the diaminopimelate epimerase family. Homodimer.

It is found in the cytoplasm. The enzyme catalyses (2S,6S)-2,6-diaminopimelate = meso-2,6-diaminopimelate. Its pathway is amino-acid biosynthesis; L-lysine biosynthesis via DAP pathway; DL-2,6-diaminopimelate from LL-2,6-diaminopimelate: step 1/1. Functionally, catalyzes the stereoinversion of LL-2,6-diaminopimelate (L,L-DAP) to meso-diaminopimelate (meso-DAP), a precursor of L-lysine and an essential component of the bacterial peptidoglycan. In Gloeothece citriformis (strain PCC 7424) (Cyanothece sp. (strain PCC 7424)), this protein is Diaminopimelate epimerase.